Consider the following 337-residue polypeptide: Ferredoxin--NADP reductase (337 aa).

The FAD site is built by D33, Q41, Y46, A86, F120, D286, and T327.

Belongs to the ferredoxin--NADP reductase type 2 family. In terms of assembly, homodimer. FAD is required as a cofactor.

The catalysed reaction is 2 reduced [2Fe-2S]-[ferredoxin] + NADP(+) + H(+) = 2 oxidized [2Fe-2S]-[ferredoxin] + NADPH. This Rickettsia canadensis (strain McKiel) protein is Ferredoxin--NADP reductase.